A 291-amino-acid chain; its full sequence is Elongation factor Ts (291 aa).

Residues 79–82 (TDFV) are involved in Mg(2+) ion dislocation from EF-Tu.

This sequence belongs to the EF-Ts family.

The protein resides in the cytoplasm. Associates with the EF-Tu.GDP complex and induces the exchange of GDP to GTP. It remains bound to the aminoacyl-tRNA.EF-Tu.GTP complex up to the GTP hydrolysis stage on the ribosome. This Dinoroseobacter shibae (strain DSM 16493 / NCIMB 14021 / DFL 12) protein is Elongation factor Ts.